A 466-amino-acid polypeptide reads, in one-letter code: Delta-1 crystallin (466 aa).

Belongs to the lyase 1 family. Argininosuccinate lyase subfamily. As to quaternary structure, homotetramer. In terms of tissue distribution, eye lens.

Its function is as follows. Delta crystallin, the principal crystallin in embryonic lens, is found only in birds and reptiles. The sequence is that of Delta-1 crystallin (ASL1) from Meleagris gallopavo (Wild turkey).